We begin with the raw amino-acid sequence, 149 residues long: D-aminoacyl-tRNA deacylase (149 aa).

The Gly-cisPro motif, important for rejection of L-amino acids motif lies at 137 to 138; that stretch reads GP.

The protein belongs to the DTD family. As to quaternary structure, homodimer.

It is found in the cytoplasm. It catalyses the reaction glycyl-tRNA(Ala) + H2O = tRNA(Ala) + glycine + H(+). The enzyme catalyses a D-aminoacyl-tRNA + H2O = a tRNA + a D-alpha-amino acid + H(+). Functionally, an aminoacyl-tRNA editing enzyme that deacylates mischarged D-aminoacyl-tRNAs. Also deacylates mischarged glycyl-tRNA(Ala), protecting cells against glycine mischarging by AlaRS. Acts via tRNA-based rather than protein-based catalysis; rejects L-amino acids rather than detecting D-amino acids in the active site. By recycling D-aminoacyl-tRNA to D-amino acids and free tRNA molecules, this enzyme counteracts the toxicity associated with the formation of D-aminoacyl-tRNA entities in vivo and helps enforce protein L-homochirality. The chain is D-aminoacyl-tRNA deacylase from Thermoanaerobacter sp. (strain X514).